The primary structure comprises 140 residues: Small ribosomal subunit protein uS8c (140 aa).

Belongs to the universal ribosomal protein uS8 family. As to quaternary structure, part of the 30S ribosomal subunit.

It localises to the plastid. Its subcellular location is the chloroplast. Its function is as follows. One of the primary rRNA binding proteins, it binds directly to 16S rRNA central domain where it helps coordinate assembly of the platform of the 30S subunit. In Euglena gracilis, this protein is Small ribosomal subunit protein uS8c (rps8).